The following is a 346-amino-acid chain: DNA primase small subunit PriS (346 aa).

Catalysis depends on residues Asp95 and Asp97. Zn(2+)-binding residues include Cys106, His108, Cys114, and Cys117. Positions 106-117 (CEHEPGTVCPIC) match the Zinc knuckle motif motif. Asp280 is a catalytic residue.

Belongs to the eukaryotic-type primase small subunit family. As to quaternary structure, heterodimer of a small subunit (PriS) and a large subunit (PriL). Requires Mg(2+) as cofactor. The cofactor is Mn(2+).

Its function is as follows. Catalytic subunit of DNA primase, an RNA polymerase that catalyzes the synthesis of short RNA molecules used as primers for DNA polymerase during DNA replication. The small subunit contains the primase catalytic core and has DNA synthesis activity on its own. Binding to the large subunit stabilizes and modulates the activity, increasing the rate of DNA synthesis while decreasing the length of the DNA fragments, and conferring RNA synthesis capability. The DNA polymerase activity may enable DNA primase to also catalyze primer extension after primer synthesis. May also play a role in DNA repair. The sequence is that of DNA primase small subunit PriS from Pyrococcus horikoshii (strain ATCC 700860 / DSM 12428 / JCM 9974 / NBRC 100139 / OT-3).